Consider the following 83-residue polypeptide: Keratin-associated protein 21-2 (83 aa).

Interacts with hair keratins.

In terms of biological role, in the hair cortex, hair keratin intermediate filaments are embedded in an interfilamentous matrix, consisting of hair keratin-associated proteins (KRTAP), which are essential for the formation of a rigid and resistant hair shaft through their extensive disulfide bond cross-linking with abundant cysteine residues of hair keratins. The matrix proteins include the high-sulfur and high-glycine-tyrosine keratins. The chain is Keratin-associated protein 21-2 (KRTAP21-2) from Homo sapiens (Human).